A 613-amino-acid polypeptide reads, in one-letter code: MEIALVPLENGGAMTVRGGDEARAGCGQATGGELQCPPTAGLSDGPKEPAPKGRGAQRDADSGVRPLPPLPDPGVRPLPPLPEELPRPRRPPPEDEEEEGDPGLGTVEDQALGTASLHHQRVHINISGLRFETQLGTLAQFPNTLLGDPAKRLRYFDPLRNEYFFDRNRPSFDGILYYYQSGGRLRRPVNVSLDVFADEIRFYQLGDEAMERFREDEGFIKEEEKPLPRNEFQRQVWLIFEYPESSGSARAIAIVSVLVILISIITFCLETLPEFRDERELLRHPPAPHQPPAPAPGANGSGVMAPPSGPTVAPLLPRTLADPFFIVETTCVIWFTFELLVRFFACPSKAGFSRNIMNIIDVVAIFPYFITLGTELAEQQPGGGGGGQNGQQAMSLAILRVIRLVRVFRIFKLSRHSKGLQILGKTLQASMRELGLLIFFLFIGVILFSSAVYFAEADNQGTHFSSIPDAFWWAVVTMTTVGYGDMRPITVGGKIVGSLCAIAGVLTIALPVPVIVSNFNYFYHRETDHEEPAVLKEEQGTQSQGPGLDRGVQRKVSGSRGSFCKAGGTLENADSARRGSCPLEKCNVKAKSNVDLRRSLYALCLDTSRETDL.

The interval 1 to 108 (MEIALVPLEN…EGDPGLGTVE (108 aa)) is disordered. The tract at residues 1–211 (MEIALVPLEN…FYQLGDEAME (211 aa)) is tetramerization domain. Topologically, residues 1–247 (MEIALVPLEN…LIFEYPESSG (247 aa)) are cytoplasmic. Positions 45-62 (GPKEPAPKGRGAQRDADS) are enriched in basic and acidic residues. 2 consecutive repeat copies span residues 61–71 (DSGVRPLPPLP) and 72–82 (DPGVRPLPPLP). Residues 61–82 (DSGVRPLPPLPDPGVRPLPPLP) form a 2 X 11 AA tandem repeat of D-[SP]-G-V-R-P-L-P-P-L-P region. Pro residues predominate over residues 66–83 (PLPPLPDPGVRPLPPLPE). The segment covering 84 to 93 (ELPRPRRPPP) has biased composition (basic and acidic residues). Residue K221 forms a Glycyl lysine isopeptide (Lys-Gly) (interchain with G-Cter in SUMO) linkage. Residues 248–269 (SARAIAIVSVLVILISIITFCL) traverse the membrane as a helical segment. Over 270–323 (ETLPEFRDERELLRHPPAPHQPPAPAPGANGSGVMAPPSGPTVAPLLPRTLADP) the chain is Extracellular. The tract at residues 282 to 304 (LRHPPAPHQPPAPAPGANGSGVM) is disordered. The segment covering 285 to 295 (PPAPHQPPAPA) has biased composition (pro residues). A helical membrane pass occupies residues 324 to 345 (FFIVETTCVIWFTFELLVRFFA). C346 is lipidated: S-palmitoyl cysteine. At 346-356 (CPSKAGFSRNI) the chain is on the cytoplasmic side. A helical transmembrane segment spans residues 357 to 377 (MNIIDVVAIFPYFITLGTELA). Topologically, residues 378–395 (EQQPGGGGGGQNGQQAMS) are extracellular. The helical; Voltage-sensor transmembrane segment at 396–416 (LAILRVIRLVRVFRIFKLSRH) threads the bilayer. The Cytoplasmic segment spans residues 417–431 (SKGLQILGKTLQASM). Positions 418 to 431 (KGLQILGKTLQASM) are S4-S5 linker. Residues 432-453 (RELGLLIFFLFIGVILFSSAVY) form a helical membrane-spanning segment. The Extracellular portion of the chain corresponds to 454–467 (FAEADNQGTHFSSI). Positions 468-479 (PDAFWWAVVTMT) form an intramembrane region, helical. The Selectivity filter motif lies at 480–485 (TVGYGD). An intramembrane segment occupies 480-487 (TVGYGDMR). Residues 488–494 (PITVGGK) are Extracellular-facing. The chain crosses the membrane as a helical span at residues 495 to 523 (IVGSLCAIAGVLTIALPVPVIVSNFNYFY). Over 524 to 613 (HRETDHEEPA…CLDTSRETDL (90 aa)) the chain is Cytoplasmic. Residues 532-559 (PAVLKEEQGTQSQGPGLDRGVQRKVSGS) form a disordered region. K536 is covalently cross-linked (Glycyl lysine isopeptide (Lys-Gly) (interchain with G-Cter in SUMO)). A Phosphoserine; by PKA modification is found at S557. The PDZ-binding motif lies at 611–613 (TDL).

Belongs to the potassium channel family. A (Shaker) (TC 1.A.1.2) subfamily. Kv1.5/KCNA5 sub-subfamily. As to quaternary structure, homotetramer and heterotetramer of potassium channel proteins. Interacts with DLG1, which enhances channel currents. Forms a ternary complex with DLG1 and CAV3. Interacts with KCNAB1. Interacts with UBE2I. Interacts with XIRP2; the interaction is required for normal action potential configuration in the heart. Glycosylated. In terms of processing, sumoylated on Lys-221, and Lys-536, preferentially with SUMO3. Sumoylation regulates the voltage sensitivity of the channel. As to expression, pancreatic islets and insulinoma.

It localises to the cell membrane. It carries out the reaction K(+)(in) = K(+)(out). Its activity is regulated as follows. Inhibited by 4-aminopyridine, nicotine, bepridil, correolide, and endothelin-1. Its function is as follows. Voltage-gated potassium channel that mediates transmembrane potassium transport in excitable membranes. Forms tetrameric potassium-selective channels through which potassium ions pass in accordance with their electrochemical gradient. The channel alternates between opened and closed conformations in response to the voltage difference across the membrane. Can form functional homotetrameric channels and heterotetrameric channels that contain variable proportions of KCNA1, KCNA2, KCNA4, KCNA5, and possibly other family members as well; channel properties depend on the type of alpha subunits that are part of the channel. Channel properties are modulated by cytoplasmic beta subunits that regulate the subcellular location of the alpha subunits and promote rapid inactivation. Homotetrameric channels display rapid activation and slow inactivation. Required for normal electrical conduction including formation of the infranodal ventricular conduction system and normal action potential configuration, as a result of its interaction with XIRP2. May play a role in regulating the secretion of insulin in normal pancreatic islets. In terms of biological role, exhibits a faster depolarization rate, reduced voltage-dependent recovery from inactivation and an excessive cumulative inactivation. This is Potassium voltage-gated channel subfamily A member 5 (KCNA5) from Homo sapiens (Human).